The sequence spans 1027 residues: uncharacterized protein (1027 aa).

This is an uncharacterized protein from Colorado tick fever virus (strain USA/Florio N-7180) (CTFV).